A 127-amino-acid chain; its full sequence is Glycine cleavage system H protein (127 aa).

A Lipoyl-binding domain is found at 22 to 104 (KVRIGITHFA…YEKAWMIVVE (83 aa)). K63 bears the N6-lipoyllysine mark.

It belongs to the GcvH family. In terms of assembly, the glycine cleavage system is composed of four proteins: P, T, L and H. (R)-lipoate serves as cofactor.

The glycine cleavage system catalyzes the degradation of glycine. The H protein shuttles the methylamine group of glycine from the P protein to the T protein. Functionally, is also involved in protein lipoylation via its role as an octanoyl/lipoyl carrier protein intermediate. The chain is Glycine cleavage system H protein from Bacillus pumilus (strain SAFR-032).